Here is a 279-residue protein sequence, read N- to C-terminus: uncharacterized protein (279 aa).

6 consecutive transmembrane segments (helical) span residues proline 29–phenylalanine 49, valine 77–leucine 97, tryptophan 105–threonine 125, valine 147–valine 167, threonine 186–phenylalanine 206, and proline 240–valine 260.

The protein belongs to the DcuC/DcuD transporter (TC 2.A.61) family.

It localises to the cell membrane. This is an uncharacterized protein from Haemophilus influenzae (strain ATCC 51907 / DSM 11121 / KW20 / Rd).